The following is a 351-amino-acid chain: Dihydroorotate dehydrogenase (quinone) (351 aa).

Residues 61–65 (AGLDK) and T85 each bind FMN. K65 contacts substrate. Position 110–114 (110–114 (NRMGF)) interacts with substrate. 2 residues coordinate FMN: N139 and N172. A substrate-binding site is contributed by N172. Catalysis depends on S175, which acts as the Nucleophile. Position 177 (N177) interacts with substrate. Residues K217 and T245 each contribute to the FMN site. 246–247 (NT) provides a ligand contact to substrate. FMN contacts are provided by residues G268, G297, and 318–319 (YS).

It belongs to the dihydroorotate dehydrogenase family. Type 2 subfamily. Monomer. Requires FMN as cofactor.

It is found in the cell membrane. The enzyme catalyses (S)-dihydroorotate + a quinone = orotate + a quinol. It functions in the pathway pyrimidine metabolism; UMP biosynthesis via de novo pathway; orotate from (S)-dihydroorotate (quinone route): step 1/1. In terms of biological role, catalyzes the conversion of dihydroorotate to orotate with quinone as electron acceptor. The sequence is that of Dihydroorotate dehydrogenase (quinone) from Xanthomonas euvesicatoria pv. vesicatoria (strain 85-10) (Xanthomonas campestris pv. vesicatoria).